The primary structure comprises 156 residues: tRNA (cytidine(34)-2'-O)-methyltransferase (156 aa).

G102, L124, and S132 together coordinate S-adenosyl-L-methionine.

The protein belongs to the class IV-like SAM-binding methyltransferase superfamily. RNA methyltransferase TrmH family. TrmL subfamily. Homodimer.

Its subcellular location is the cytoplasm. It carries out the reaction cytidine(34) in tRNA + S-adenosyl-L-methionine = 2'-O-methylcytidine(34) in tRNA + S-adenosyl-L-homocysteine + H(+). It catalyses the reaction 5-carboxymethylaminomethyluridine(34) in tRNA(Leu) + S-adenosyl-L-methionine = 5-carboxymethylaminomethyl-2'-O-methyluridine(34) in tRNA(Leu) + S-adenosyl-L-homocysteine + H(+). Methylates the ribose at the nucleotide 34 wobble position in the two leucyl isoacceptors tRNA(Leu)(CmAA) and tRNA(Leu)(cmnm5UmAA). Catalyzes the methyl transfer from S-adenosyl-L-methionine to the 2'-OH of the wobble nucleotide. The sequence is that of tRNA (cytidine(34)-2'-O)-methyltransferase from Burkholderia cenocepacia (strain HI2424).